Consider the following 246-residue polypeptide: 3-deoxy-manno-octulosonate cytidylyltransferase (246 aa).

The protein belongs to the KdsB family.

The protein resides in the cytoplasm. The catalysed reaction is 3-deoxy-alpha-D-manno-oct-2-ulosonate + CTP = CMP-3-deoxy-beta-D-manno-octulosonate + diphosphate. Its pathway is nucleotide-sugar biosynthesis; CMP-3-deoxy-D-manno-octulosonate biosynthesis; CMP-3-deoxy-D-manno-octulosonate from 3-deoxy-D-manno-octulosonate and CTP: step 1/1. It participates in bacterial outer membrane biogenesis; lipopolysaccharide biosynthesis. Its function is as follows. Activates KDO (a required 8-carbon sugar) for incorporation into bacterial lipopolysaccharide in Gram-negative bacteria. The protein is 3-deoxy-manno-octulosonate cytidylyltransferase of Leptospira biflexa serovar Patoc (strain Patoc 1 / Ames).